A 243-amino-acid polypeptide reads, in one-letter code: ATP synthase subunit b, mitochondrial (243 aa).

This sequence belongs to the eukaryotic ATPase B chain family. In terms of assembly, F-type ATPases have 2 components, CF(1) - the catalytic core - and CF(0) - the membrane proton channel. CF(1) has five subunits: alpha(3), beta(3), gamma(1), delta(1), epsilon(1). CF(0) has three main subunits: a, b and c.

The protein resides in the mitochondrion. The protein localises to the mitochondrion inner membrane. Its function is as follows. Mitochondrial membrane ATP synthase (F(1)F(0) ATP synthase or Complex V) produces ATP from ADP in the presence of a proton gradient across the membrane which is generated by electron transport complexes of the respiratory chain. F-type ATPases consist of two structural domains, F(1) - containing the extramembraneous catalytic core, and F(0) - containing the membrane proton channel, linked together by a central stalk and a peripheral stalk. During catalysis, ATP synthesis in the catalytic domain of F(1) is coupled via a rotary mechanism of the central stalk subunits to proton translocation. Part of the complex F(0) domain and the peripheric stalk, which acts as a stator to hold the catalytic alpha(3)beta(3) subcomplex and subunit a/ATP6 static relative to the rotary elements. This is ATP synthase subunit b, mitochondrial from Drosophila melanogaster (Fruit fly).